The following is a 171-amino-acid chain: Large ribosomal subunit protein bL17 (171 aa).

A compositionally biased stretch (basic and acidic residues) spans 140-152 (KREIQTKAREEKR). The tract at residues 140–171 (KREIQTKAREEKRATRKSNSAPVNKETTSKKK) is disordered. The segment covering 156–165 (KSNSAPVNKE) has biased composition (polar residues).

This sequence belongs to the bacterial ribosomal protein bL17 family. In terms of assembly, part of the 50S ribosomal subunit. Contacts protein L32.

This is Large ribosomal subunit protein bL17 from Leptospira interrogans serogroup Icterohaemorrhagiae serovar Lai (strain 56601).